The primary structure comprises 81 residues: MSALFCDATHELDAIGLRCPEPVMMVRKKVRLMAQGETLLVSADDPSTTRDIPSFCRFMDHTLVASETEQAPYRYLIRKGQ.

Catalysis depends on Cys19, which acts as the Cysteine persulfide intermediate.

The protein belongs to the sulfur carrier protein TusA family.

Its subcellular location is the cytoplasm. Its function is as follows. Sulfur carrier protein which probably makes part of a sulfur-relay system. The chain is Sulfur carrier protein TusA from Aeromonas salmonicida (strain A449).